The following is a 333-amino-acid chain: Gap junction alpha-4 protein (333 aa).

Over 1 to 20 (MGDWGFLEKLLDQVQEHSTV) the chain is Cytoplasmic. A helical transmembrane segment spans residues 21–40 (VGKIWLTVLFIFRILILGLA). Residues 41-76 (GESVWGDEQSDFECNTAQPGCTNVCYDQAFPISHIR) lie on the Extracellular side of the membrane. The chain crosses the membrane as a helical span at residues 77–99 (YWVLQFLFVSTPTLIYLGHVIYL). Topologically, residues 100 to 148 (SRREERLRQKEGELRALPSKDPHVERALAAIEHQMAKISVAEDGRLRIR) are cytoplasmic. A helical transmembrane segment spans residues 149–171 (GALMGTYVISVLCKSVLEAGFLY). The Extracellular segment spans residues 172–208 (GQWRLYGWTMEPVFVCQRAPCPHVVDCYVSRPTEKTI). The chain crosses the membrane as a helical span at residues 209–231 (FIIFMLVVGVISLVLNLLELVHL). The Cytoplasmic portion of the chain corresponds to 232–333 (LCRCVSREIK…NSSASKKQYV (102 aa)). Residues 292–333 (ANLTTEERLTSTRPPPFVNAAPQGGQKSSSRPNSSASKKQYV) are disordered. Low complexity predominate over residues 318–333 (KSSSRPNSSASKKQYV).

Belongs to the connexin family. Alpha-type (group II) subfamily. In terms of assembly, a connexon is composed of a hexamer of connexins. In terms of tissue distribution, highly expressed in lung.

The protein localises to the cell membrane. It is found in the cell junction. The protein resides in the gap junction. Its function is as follows. One gap junction consists of a cluster of closely packed pairs of transmembrane channels, the connexons, through which materials of low MW diffuse from one cell to a neighboring cell. This chain is Gap junction alpha-4 protein (Gja4), found in Rattus norvegicus (Rat).